Consider the following 330-residue polypeptide: Putative F-box protein At1g57690 (330 aa).

An F-box domain is found at 25–72 (VDIISSLPDVILQHILFSFQTKYAIRTSVLSKRWRHEADAINKALSQY).

This is Putative F-box protein At1g57690 from Arabidopsis thaliana (Mouse-ear cress).